Consider the following 837-residue polypeptide: Phosphatidylinositol-glycan-specific phospholipase D (837 aa).

An N-terminal signal peptide occupies residues 1 to 23; sequence MSAGRLWSSLLLLLPLFCSKSSS. 5 N-linked (GlcNAc...) asparagine glycosylation sites follow: Asn94, Asn267, Asn287, Asn303, and Asn317. FG-GAP repeat units follow at residues 364–425, 431–492, 494–554, 561–619, 629–689, 701–767, and 785–837; these read SPSA…GLPP, NKEG…GRLS, SPNV…RNDK, EADW…SLGK, QSTI…GATR, ALLS…TLGD, and QYVL…FSSD. Asn477, Asn496, Asn586, Asn599, and Asn655 each carry an N-linked (GlcNAc...) asparagine glycan.

It belongs to the GPLD1 family. In terms of assembly, monomer. In terms of tissue distribution, widely expressed.

It localises to the secreted. It catalyses the reaction a 6-(alpha-D-glucosaminyl)-1-(1,2-diacyl-sn-glycero-3-phospho)-1D-myo-inositol + H2O = 6-(alpha-D-glucosaminyl)-1D-myo-inositol + a 1,2-diacyl-sn-glycero-3-phosphate + H(+). In terms of biological role, this protein hydrolyzes the inositol phosphate linkage in proteins anchored by phosphatidylinositol glycans (GPI-anchor) thus releasing these proteins from the membrane. The sequence is that of Phosphatidylinositol-glycan-specific phospholipase D (Gpld1) from Mus musculus (Mouse).